Here is a 172-residue protein sequence, read N- to C-terminus: Protein-export protein SecB (172 aa).

This sequence belongs to the SecB family. As to quaternary structure, homotetramer, a dimer of dimers. One homotetramer interacts with 1 SecA dimer.

The protein localises to the cytoplasm. In terms of biological role, one of the proteins required for the normal export of preproteins out of the cell cytoplasm. It is a molecular chaperone that binds to a subset of precursor proteins, maintaining them in a translocation-competent state. It also specifically binds to its receptor SecA. The sequence is that of Protein-export protein SecB from Xylella fastidiosa (strain 9a5c).